The primary structure comprises 398 residues: Succinate--CoA ligase [ADP-forming] subunit beta (398 aa).

An ATP-grasp domain is found at 9–254 (KRLLHEYGAP…TSEEDPKEIE (246 aa)). ATP is bound by residues Lys46, 53-55 (GRG), Glu109, Ala112, and Glu117. Residues Asn209 and Asp223 each coordinate Mg(2+). Substrate is bound by residues Asn274 and 331–333 (GIM).

Belongs to the succinate/malate CoA ligase beta subunit family. Heterotetramer of two alpha and two beta subunits. Mg(2+) is required as a cofactor.

It catalyses the reaction succinate + ATP + CoA = succinyl-CoA + ADP + phosphate. The catalysed reaction is GTP + succinate + CoA = succinyl-CoA + GDP + phosphate. Its pathway is carbohydrate metabolism; tricarboxylic acid cycle; succinate from succinyl-CoA (ligase route): step 1/1. Succinyl-CoA synthetase functions in the citric acid cycle (TCA), coupling the hydrolysis of succinyl-CoA to the synthesis of either ATP or GTP and thus represents the only step of substrate-level phosphorylation in the TCA. The beta subunit provides nucleotide specificity of the enzyme and binds the substrate succinate, while the binding sites for coenzyme A and phosphate are found in the alpha subunit. The chain is Succinate--CoA ligase [ADP-forming] subunit beta from Bartonella henselae (strain ATCC 49882 / DSM 28221 / CCUG 30454 / Houston 1) (Rochalimaea henselae).